Reading from the N-terminus, the 139-residue chain is Translation initiation factor 2 subunit beta (139 aa).

It belongs to the eIF-2-beta/eIF-5 family. As to quaternary structure, heterotrimer composed of an alpha, a beta and a gamma chain.

Functionally, eIF-2 functions in the early steps of protein synthesis by forming a ternary complex with GTP and initiator tRNA. The chain is Translation initiation factor 2 subunit beta from Nanoarchaeum equitans (strain Kin4-M).